We begin with the raw amino-acid sequence, 259 residues long: Formate channel BtFdhC (259 aa).

The Cytoplasmic segment spans residues 1–26 (MAFHKPEQIAELVIEAGVQKVSQTLP). Residues 27-47 (AMLILGFLGGAFISLGFLLNI) form a helical membrane-spanning segment. Over 48-66 (RVLGNLPERWGSLVNVLGG) the chain is Periplasmic. Residues 67-97 (AVFPVGLMLVVLAGGELITGNMMSLSMALYA) traverse the membrane as a helical segment. Over 98–108 (KKITLVSVLNN) the chain is Cytoplasmic. A helical transmembrane segment spans residues 109 to 130 (WVWITFMNFVGAIFVAYCFGHL). Residues 131 to 157 (GGLTEGDYLNKTVAIAEGKLHESFGRT) are Periplasmic-facing. A helical membrane pass occupies residues 158-176 (LILAIGCNWLVCLALWLAY). Topologically, residues 177-187 (GTSDFVGKIIG) are cytoplasmic. The chain crosses the membrane as a helical span at residues 188–216 (IWIPIMAFVVIGFQQVVANMFVISAVIFA). The Periplasmic segment spans residues 217 to 227 (GHLTWMDLARN). Residues 228-250 (FVPVFIGNVIGGAGFVGFAYFAC) form a helical membrane-spanning segment. Residues 251–259 (YQKQHSNMK) are Cytoplasmic-facing.

Belongs to the FNT transporter (TC 1.A.16) family.

The protein localises to the cell inner membrane. The catalysed reaction is formate(in) = formate(out). Acts as a formate transporter. The protein is Formate channel BtFdhC of Bacillus thuringiensis.